We begin with the raw amino-acid sequence, 34 residues long: Potassium channel toxin alpha-KTx 6.3 (34 aa).

4 disulfide bridges follow: C3–C24, C9–C29, C13–C31, and C19–C34. Cysteine amide is present on C34.

It belongs to the short scorpion toxin superfamily. Potassium channel inhibitor family. Alpha-KTx 06 subfamily. Amidated. The amidated toxin shows 5-fold more affinity for Kv1.3/KCNA3 than the synthetic carboxylated form. In terms of tissue distribution, expressed by the venom gland.

It is found in the secreted. Potently blocks voltage-gated potassium channels Kv1.1/KCNA1 (IC(50)=7-11 nM) and Kv1.3/KCNA3 (IC(50)=11-29 pM). Also mildly blocks intermediate (IK) conductance calcium-activated potassium channels (KCa3.1/KCNN4) and ERG1/Kv11.1/KCNH2. Shows ability to suppress proliferation of lymphocytes, which are known to be sensitive to Kv1.3/KCNA3 homotetrameric channel block. In Heterometrus spinifer (Asia giant forest scorpion), this protein is Potassium channel toxin alpha-KTx 6.3.